A 295-amino-acid polypeptide reads, in one-letter code: Probable deoxyhypusine synthase (295 aa).

The active-site Nucleophile is lysine 267.

This sequence belongs to the deoxyhypusine synthase family. It depends on NAD(+) as a cofactor.

It carries out the reaction [eIF5A protein]-L-lysine + spermidine = [eIF5A protein]-deoxyhypusine + propane-1,3-diamine. It participates in protein modification; eIF5A hypusination. Catalyzes the NAD-dependent oxidative cleavage of spermidine and the subsequent transfer of the butylamine moiety of spermidine to the epsilon-amino group of a specific lysine residue of the eIF-5A precursor protein to form the intermediate deoxyhypusine residue. This Pyrobaculum calidifontis (strain DSM 21063 / JCM 11548 / VA1) protein is Probable deoxyhypusine synthase.